Consider the following 132-residue polypeptide: Histone H2A.1 (132 aa).

At Ser-2 the chain carries N-acetylserine. N6-acetyllysine is present on residues Lys-5 and Lys-8. 2 positions are modified to N6-succinyllysine: Lys-14 and Lys-22. An N5-methylglutamine modification is found at Gln-106. Residue Lys-120 is modified to N6-malonyllysine; alternate. Lys-127 is covalently cross-linked (Glycyl lysine isopeptide (Lys-Gly) (interchain with G-Cter in SUMO)). A Phosphoserine modification is found at Ser-129. The [ST]-Q motif signature appears at 129 to 130 (SQ).

It belongs to the histone H2A family. In terms of assembly, the nucleosome is a histone octamer containing two molecules each of H2A, H2B, H3 and H4 assembled in one H3-H4 heterotetramer and two H2A-H2B heterodimers. The octamer wraps approximately 147 bp of DNA. Phosphorylated to form H2AS128ph (gamma-H2A) in response to DNA double-strand breaks (DSBs) generated by exogenous genotoxic agents and by stalled replication forks. Phosphorylation is dependent on the DNA damage checkpoint kinases MEC1/ATR and TEL1/ATM, spreads on either side of a detected DSB site and may mark the surrounding chromatin for recruitment of proteins required for DNA damage signaling and repair. Gamma-H2A interacts with ARP4, a shared component of the NuA4 histone acetyltransferase complex and the INO80 and SWR1 chromatin remodeling complexes, and serves to recruit first NuA4, mediating histone H4 acetylation, and subsequently the INO80/SWR1 complexes, facilitating DNA resection, to DSB sites. Gamma-H2A is required for sequestering cohesin around the break site, which is important for efficient post-replicative double-strand break repair by homologous recombination, holding the damaged chromatid close to its undamaged sister template. Gamma-H2A is removed from the DNA prior to the strand invasion-primer extension step of the repair process and subsequently dephosphorylated by PPH3, a component of the histone H2A phosphatase complex (HTP-C). Dephosphorylation is necessary for efficient recovery from the DNA damage checkpoint. In terms of processing, N-acetylated by NAT4. Post-translationally, acetylated by ESA1, a component of the NuA4 histone acetyltransferase (HAT) complex, to form H2AK4ac and H2AK7ac. Glutamine methylation at Gln-106 (H2AQ105me) by NOP1 is specifically dedicated to polymerase I. It is present at 35S ribosomal DNA locus and impairs binding of the FACT complex. In terms of processing, sumoylated to from H2AK126su. May lead to transcriptional repression.

The protein localises to the nucleus. Its subcellular location is the chromosome. Its function is as follows. Core component of nucleosome which plays a central role in DNA double strand break (DSB) repair. Nucleosomes wrap and compact DNA into chromatin, limiting DNA accessibility to the cellular machineries which require DNA as a template. Histones thereby play a central role in transcription regulation, DNA repair, DNA replication and chromosomal stability. DNA accessibility is regulated via a complex set of post-translational modifications of histones, also called histone code, and nucleosome remodeling. The polypeptide is Histone H2A.1 (HTA1) (Saccharomyces cerevisiae (strain ATCC 204508 / S288c) (Baker's yeast)).